A 153-amino-acid polypeptide reads, in one-letter code: Deoxyuridine 5'-triphosphate nucleotidohydrolase (153 aa).

Residues 71–73 (RSG), asparagine 84, 88–90 (LID), and methionine 98 each bind substrate.

Belongs to the dUTPase family. Mg(2+) serves as cofactor.

It carries out the reaction dUTP + H2O = dUMP + diphosphate + H(+). It functions in the pathway pyrimidine metabolism; dUMP biosynthesis; dUMP from dCTP (dUTP route): step 2/2. Functionally, this enzyme is involved in nucleotide metabolism: it produces dUMP, the immediate precursor of thymidine nucleotides and it decreases the intracellular concentration of dUTP so that uracil cannot be incorporated into DNA. The sequence is that of Deoxyuridine 5'-triphosphate nucleotidohydrolase from Hydrogenovibrio crunogenus (strain DSM 25203 / XCL-2) (Thiomicrospira crunogena).